The chain runs to 468 residues: Bifunctional protein HldE (468 aa).

A ribokinase region spans residues 1–315 (MAKKVEILVV…ELLRSRANAE (315 aa)). 192–195 (NRKE) is an ATP binding site. Residue D260 is part of the active site. The cytidylyltransferase stretch occupies residues 340-468 (FTNGCFDILH…IVKRIKDADK (129 aa)).

This sequence in the N-terminal section; belongs to the carbohydrate kinase PfkB family. The protein in the C-terminal section; belongs to the cytidylyltransferase family. In terms of assembly, homodimer.

The catalysed reaction is D-glycero-beta-D-manno-heptose 7-phosphate + ATP = D-glycero-beta-D-manno-heptose 1,7-bisphosphate + ADP + H(+). The enzyme catalyses D-glycero-beta-D-manno-heptose 1-phosphate + ATP + H(+) = ADP-D-glycero-beta-D-manno-heptose + diphosphate. It participates in nucleotide-sugar biosynthesis; ADP-L-glycero-beta-D-manno-heptose biosynthesis; ADP-L-glycero-beta-D-manno-heptose from D-glycero-beta-D-manno-heptose 7-phosphate: step 1/4. The protein operates within nucleotide-sugar biosynthesis; ADP-L-glycero-beta-D-manno-heptose biosynthesis; ADP-L-glycero-beta-D-manno-heptose from D-glycero-beta-D-manno-heptose 7-phosphate: step 3/4. Catalyzes the phosphorylation of D-glycero-D-manno-heptose 7-phosphate at the C-1 position to selectively form D-glycero-beta-D-manno-heptose-1,7-bisphosphate. Its function is as follows. Catalyzes the ADP transfer from ATP to D-glycero-beta-D-manno-heptose 1-phosphate, yielding ADP-D-glycero-beta-D-manno-heptose. This chain is Bifunctional protein HldE, found in Campylobacter curvus (strain 525.92).